Consider the following 198-residue polypeptide: MIKKSAAILAGGKSSRMNYINKAFLKYEENYFIERIIKALEDYEEIIIISNNPEEYTEFGLKVFKDIYPSQGPLSGIHSALNYIKNDYCLVVACDMPFINKEVVNYLGNIKEDYEILIPKFQERLQPLCAIYKKSCKDIMEKELINNSNKLIKTCFKFSMKVVEEFPFIEKIHKKEIKNFYNINTVHEYEDLIRKKEI.

GTP-binding positions include 9–11, Lys22, Asp66, and Asp95; that span reads LAG. Asp95 lines the Mg(2+) pocket.

The protein belongs to the MobA family. Requires Mg(2+) as cofactor.

Its subcellular location is the cytoplasm. It catalyses the reaction Mo-molybdopterin + GTP + H(+) = Mo-molybdopterin guanine dinucleotide + diphosphate. Its function is as follows. Transfers a GMP moiety from GTP to Mo-molybdopterin (Mo-MPT) cofactor (Moco or molybdenum cofactor) to form Mo-molybdopterin guanine dinucleotide (Mo-MGD) cofactor. The sequence is that of Probable molybdenum cofactor guanylyltransferase from Clostridium perfringens (strain SM101 / Type A).